Here is a 202-residue protein sequence, read N- to C-terminus: Small ribosomal subunit protein uS5 (202 aa).

An S5 DRBM domain is found at 42-105; the sequence is LKDEVLKIMP…ILAKLSIVPV (64 aa). A Phosphothreonine modification is found at Thr-192.

Belongs to the universal ribosomal protein uS5 family. As to quaternary structure, component of the small ribosomal subunit. Interacts with zinc finger protein ZNF277 (via zinc-finger domains); the interaction is direct; the interaction is extra-ribosomal. Interaction with ZNF277 competes with the binding of RPS2 to protein arginine methyltransferase PRMT3. Citrullinated by PADI4 in the Arg/Gly-rich region. In terms of processing, asymmetric arginine dimethylation by PRMT3 occurs at multiple sites in the Arg/Gly-rich region. Post-translationally, monoubiquitinated by RNF10 when a ribosome has stalled during translation, leading to its degradation by the proteasome. Deubiquitinated by USP10, preventing degradation by the proteasome and promoting 40S ribosome subunit recycling following ribosome dissociation.

It localises to the cytoplasm. The protein resides in the nucleus. Its subcellular location is the nucleolus. Functionally, component of the ribosome, a large ribonucleoprotein complex responsible for the synthesis of proteins in the cell. The small ribosomal subunit (SSU) binds messenger RNAs (mRNAs) and translates the encoded message by selecting cognate aminoacyl-transfer RNA (tRNA) molecules. The large subunit (LSU) contains the ribosomal catalytic site termed the peptidyl transferase center (PTC), which catalyzes the formation of peptide bonds, thereby polymerizing the amino acids delivered by tRNAs into a polypeptide chain. The nascent polypeptides leave the ribosome through a tunnel in the LSU and interact with protein factors that function in enzymatic processing, targeting, and the membrane insertion of nascent chains at the exit of the ribosomal tunnel. Plays a role in the assembly and function of the 40S ribosomal subunit. Mutations in this protein affects the control of translational fidelity. Involved in nucleolar processing of pre-18S ribosomal RNA and ribosome assembly. The sequence is that of Small ribosomal subunit protein uS5 (RPS2) from Cricetulus griseus (Chinese hamster).